The following is a 123-amino-acid chain: Ribonuclease P protein component (123 aa).

This sequence belongs to the RnpA family. In terms of assembly, consists of a catalytic RNA component (M1 or rnpB) and a protein subunit.

It carries out the reaction Endonucleolytic cleavage of RNA, removing 5'-extranucleotides from tRNA precursor.. Functionally, RNaseP catalyzes the removal of the 5'-leader sequence from pre-tRNA to produce the mature 5'-terminus. It can also cleave other RNA substrates such as 4.5S RNA. The protein component plays an auxiliary but essential role in vivo by binding to the 5'-leader sequence and broadening the substrate specificity of the ribozyme. The sequence is that of Ribonuclease P protein component from Streptococcus pneumoniae serotype 4 (strain ATCC BAA-334 / TIGR4).